The sequence spans 527 residues: MILSSYSSFQSVLCCCCCRCSVQKRQVRTQISLSREEELSEKHSQRQRPWFAKLMGKTQSNRGGVQPSKRKPLPPLPQEPPDERIQVKALYDFLPREPGNLALKRAEEYLILERCDPHWWKARDRFGNEGLIPSNYVTENRLANLEIYEWYHKNITRNQTERLLRQEAKEGAFIVRDSRHLGSYTISVFTRARRHTQSSIKHYQIKKNDSGQWYITERHLFPSVPELIQYHQYNAAGLISRLRYPIGLLGSCLPATSGFSYEKWEIDPSELAFVKEIGSGQFGVVHLGEWRAHIPVAIKAINEGSMSEEDFIEEAKVMMKLSHSRLVQLYGVCIQQKPLYIVTEFMENGCLLDYLRERKGQLQKALLLSMCQDICEGMAYLERSCYIHRDLAARNCLVSSACVVKISDFGMARYVLDDEYISSSGAKFPVKWCPPEVFHFNKYSSKSDVWSFGVLMWEVFTEGKMPFENKSNLQVVEAISQGFRLYRPHLAPMTIYRVMYSCWHESPKGRPTFAELLQVLTEIAETW.

A disordered region spans residues 58–81 (TQSNRGGVQPSKRKPLPPLPQEPP). The SH3 domain occupies 82–142 (DERIQVKALY…PSNYVTENRL (61 aa)). The residue at position 91 (Tyr-91) is a Phosphotyrosine; by autocatalysis. The SH2 domain occupies 150-246 (WYHKNITRNQ…GLISRLRYPI (97 aa)). In terms of domain architecture, Protein kinase spans 271 to 527 (LAFVKEIGSG…QVLTEIAETW (257 aa)). ATP contacts are provided by residues 277–285 (IGSGQFGVV) and Lys-299. The Proton acceptor role is filled by Asp-390. A Phosphotyrosine; by FYN and autocatalysis modification is found at Tyr-420.

This sequence belongs to the protein kinase superfamily. Tyr protein kinase family. TEC subfamily. As to quaternary structure, interacts with PARP1 and EEF1A1. Interacts with SH2D2A. Interacts with FYN. Phosphorylated at Tyr-420 by FYN. Autophosphorylation at Tyr-91 is critical for the activation of TXK, leading to the up-regulation of IFN-gamma gene transcription. In terms of processing, the cysteine string at the N-terminus is palmitoylated and required for the proper subcellular location. Expressed in early thymocytes, T-cells and mast cells.

The protein localises to the cytoplasm. It localises to the nucleus. The protein resides in the cell membrane. It catalyses the reaction L-tyrosyl-[protein] + ATP = O-phospho-L-tyrosyl-[protein] + ADP + H(+). Activated by phosphorylation by FYN. Non-receptor tyrosine kinase that plays a redundant role with ITK in regulation of the adaptive immune response. Regulates the development, function and differentiation of conventional T-cells and nonconventional NKT-cells. When antigen presenting cells (APC) activate T-cell receptor (TCR), a series of phosphorylation leads to the recruitment of TXK to the cell membrane, where it is phosphorylated at Tyr-420. Phosphorylation leads to TXK full activation. Also contributes to signaling from many receptors and participates in multiple downstream pathways, including regulation of the actin cytoskeleton. Like ITK, can phosphorylate PLCG1, leading to its localization in lipid rafts and activation, followed by subsequent cleavage of its substrates. In turn, the endoplasmic reticulum releases calcium in the cytoplasm and the nuclear activator of activated T-cells (NFAT) translocates into the nucleus to perform its transcriptional duty. Plays a role in the positive regulation of IFNG transcription in T-helper 1 cells as part of an IFNG promoter-binding complex with PARP1 and EEF1A1. Within the complex, phosphorylates both PARP1 and EEF1A1. Also phosphorylates key sites in LCP2 leading to the up-regulation of Th1 preferred cytokine IL-2. Phosphorylates 'Tyr-201' of CTLA4 which leads to the association of PI-3 kinase with the CTLA4 receptor. The chain is Tyrosine-protein kinase TXK (Txk) from Mus musculus (Mouse).